A 185-amino-acid polypeptide reads, in one-letter code: MIDETLLEGEEKMQKAVEVAKDELATVRTGRANPAMFSGIVVDYYGSPTPLNQLASISVPEARLVVIKPYDASQLGAMEKAIRDSDLGVNPSNDGQLIRVSIPQMTEERRKEMVKLAKHKGEEGRITVRGIRRKVKEEIDRIVKDGEAGEDEGTRGEKELENLTHRYVAQIDELVKHKEAELLEV.

This sequence belongs to the RRF family.

The protein resides in the cytoplasm. Functionally, responsible for the release of ribosomes from messenger RNA at the termination of protein biosynthesis. May increase the efficiency of translation by recycling ribosomes from one round of translation to another. The polypeptide is Ribosome-recycling factor (Saccharopolyspora erythraea (strain ATCC 11635 / DSM 40517 / JCM 4748 / NBRC 13426 / NCIMB 8594 / NRRL 2338)).